The chain runs to 69 residues: Large ribosomal subunit protein bL32c (69 aa).

The protein belongs to the bacterial ribosomal protein bL32 family.

It localises to the plastid. The protein localises to the chloroplast. This chain is Large ribosomal subunit protein bL32c (rpl32), found in Anthoceros angustus (Hornwort).